A 258-amino-acid chain; its full sequence is Ribosomal protein L11 methyltransferase (258 aa).

Positions 117, 138, 160, and 201 each coordinate S-adenosyl-L-methionine.

It belongs to the methyltransferase superfamily. PrmA family.

It is found in the cytoplasm. It carries out the reaction L-lysyl-[protein] + 3 S-adenosyl-L-methionine = N(6),N(6),N(6)-trimethyl-L-lysyl-[protein] + 3 S-adenosyl-L-homocysteine + 3 H(+). Its function is as follows. Methylates ribosomal protein L11. This is Ribosomal protein L11 methyltransferase from Thermosipho melanesiensis (strain DSM 12029 / CIP 104789 / BI429).